Consider the following 573-residue polypeptide: Splicing factor U2af large subunit B (573 aa).

Residues M1–D12 show a composition bias toward acidic residues. The interval M1 to L187 is disordered. Residues S38–S145 are compositionally biased toward basic and acidic residues. Residues S161–R173 are compositionally biased toward basic residues. 3 RRM domains span residues R239–D322, D359–Q437, and E478–N564.

The protein belongs to the splicing factor SR family. Expressed in stems, leaves and apical buds.

The protein localises to the nucleus. Necessary for the splicing of pre-mRNA. Binds to the U -enriched regions of plant introns. The chain is Splicing factor U2af large subunit B (U2AF65B) from Nicotiana plumbaginifolia (Leadwort-leaved tobacco).